We begin with the raw amino-acid sequence, 313 residues long: Ribosomal RNA small subunit methyltransferase H (313 aa).

S-adenosyl-L-methionine contacts are provided by residues 35–37 (GGH), D55, F79, D100, and Q107.

This sequence belongs to the methyltransferase superfamily. RsmH family.

Its subcellular location is the cytoplasm. The catalysed reaction is cytidine(1402) in 16S rRNA + S-adenosyl-L-methionine = N(4)-methylcytidine(1402) in 16S rRNA + S-adenosyl-L-homocysteine + H(+). Functionally, specifically methylates the N4 position of cytidine in position 1402 (C1402) of 16S rRNA. This Burkholderia mallei (strain NCTC 10247) protein is Ribosomal RNA small subunit methyltransferase H.